The chain runs to 89 residues: Small ribosomal subunit protein uS15c (89 aa).

The protein belongs to the universal ribosomal protein uS15 family. Part of the 30S ribosomal subunit.

It is found in the plastid. This Aneura mirabilis (Parasitic liverwort) protein is Small ribosomal subunit protein uS15c (rps15).